The sequence spans 86 residues: Large ribosomal subunit protein bL31B (86 aa).

The protein belongs to the bacterial ribosomal protein bL31 family. Type B subfamily. As to quaternary structure, part of the 50S ribosomal subunit.

This Citrobacter koseri (strain ATCC BAA-895 / CDC 4225-83 / SGSC4696) protein is Large ribosomal subunit protein bL31B.